The chain runs to 419 residues: Tyrosine--tRNA ligase (419 aa).

Residue Y34 coordinates L-tyrosine. The 'HIGH' region signature appears at 39–48 (PTADSLHLGH). Residues Y169 and Q173 each contribute to the L-tyrosine site. Positions 229–233 (KFGKS) match the 'KMSKS' region motif. K232 provides a ligand contact to ATP. Positions 352–419 (LNIIDLLVTS…KKKYFVLNFK (68 aa)) constitute an S4 RNA-binding domain.

Belongs to the class-I aminoacyl-tRNA synthetase family. TyrS type 1 subfamily. Homodimer.

It is found in the cytoplasm. The catalysed reaction is tRNA(Tyr) + L-tyrosine + ATP = L-tyrosyl-tRNA(Tyr) + AMP + diphosphate + H(+). Its function is as follows. Catalyzes the attachment of tyrosine to tRNA(Tyr) in a two-step reaction: tyrosine is first activated by ATP to form Tyr-AMP and then transferred to the acceptor end of tRNA(Tyr). This chain is Tyrosine--tRNA ligase, found in Streptococcus agalactiae serotype V (strain ATCC BAA-611 / 2603 V/R).